Consider the following 491-residue polypeptide: Pyruvate carboxylase subunit A (491 aa).

A Biotin carboxylation domain is found at 1-445 (MFSKILVANR…HTHFVDEYRR (445 aa)). Residues K116, E200, and H235 each coordinate ATP. In terms of domain architecture, ATP-grasp spans 120–316 (KKLMKKAGVP…LVKEQIRVAS (197 aa)). R291 is a catalytic residue.

In terms of assembly, heterooctamer of four A and four B subunits. It depends on Mg(2+) as a cofactor. Mn(2+) serves as cofactor. Requires Co(2+) as cofactor.

It carries out the reaction hydrogencarbonate + pyruvate + ATP = oxaloacetate + ADP + phosphate + H(+). It functions in the pathway carbohydrate biosynthesis; gluconeogenesis. With respect to regulation, inhibited by ADP and alpha-ketoglutarate. In terms of biological role, pyruvate carboxylase catalyzes a 2-step reaction, involving the ATP-dependent carboxylation of the covalently attached biotin in the first step and the transfer of the carboxyl group to pyruvate in the second. The polypeptide is Pyruvate carboxylase subunit A (pycA) (Methanothermobacter thermautotrophicus (strain ATCC 29096 / DSM 1053 / JCM 10044 / NBRC 100330 / Delta H) (Methanobacterium thermoautotrophicum)).